A 181-amino-acid polypeptide reads, in one-letter code: Isopentenyl-diphosphate Delta-isomerase (181 aa).

2 residues coordinate Mn(2+): histidine 25 and histidine 32. The Nudix hydrolase domain maps to 30–164; the sequence is PLHLAFSCWL…PWAFSPWMVM (135 aa). Cysteine 67 is a catalytic residue. Histidine 69 contributes to the Mn(2+) binding site. Glutamate 87 is a Mg(2+) binding site. Residues glutamate 114 and glutamate 116 each contribute to the Mn(2+) site. Residue glutamate 116 is part of the active site.

This sequence belongs to the IPP isomerase type 1 family. As to quaternary structure, homodimer. It depends on Mg(2+) as a cofactor. The cofactor is Mn(2+).

It localises to the cytoplasm. It catalyses the reaction isopentenyl diphosphate = dimethylallyl diphosphate. It functions in the pathway isoprenoid biosynthesis; dimethylallyl diphosphate biosynthesis; dimethylallyl diphosphate from isopentenyl diphosphate: step 1/1. Catalyzes the 1,3-allylic rearrangement of the homoallylic substrate isopentenyl (IPP) to its highly electrophilic allylic isomer, dimethylallyl diphosphate (DMAPP). This chain is Isopentenyl-diphosphate Delta-isomerase, found in Salmonella agona (strain SL483).